The sequence spans 203 residues: Glycerol-3-phosphate acyltransferase (203 aa).

5 helical membrane passes run 4–24 (IAYL…AVIF), 56–76 (LGVL…GFYL), 80–100 (ISVI…PVFF), 115–135 (IIPM…FVFL), and 149–169 (LIVP…VALV).

Belongs to the PlsY family. As to quaternary structure, probably interacts with PlsX.

It is found in the cell inner membrane. The catalysed reaction is an acyl phosphate + sn-glycerol 3-phosphate = a 1-acyl-sn-glycero-3-phosphate + phosphate. Its pathway is lipid metabolism; phospholipid metabolism. Catalyzes the transfer of an acyl group from acyl-phosphate (acyl-PO(4)) to glycerol-3-phosphate (G3P) to form lysophosphatidic acid (LPA). This enzyme utilizes acyl-phosphate as fatty acyl donor, but not acyl-CoA or acyl-ACP. In Glaesserella parasuis serovar 5 (strain SH0165) (Haemophilus parasuis), this protein is Glycerol-3-phosphate acyltransferase.